The following is a 106-amino-acid chain: uncharacterized protein (106 aa).

Belongs to the HesB/IscA family.

This is an uncharacterized protein from Rhodobacter capsulatus (Rhodopseudomonas capsulata).